Reading from the N-terminus, the 270-residue chain is UPF0162 protein VC_2176 (270 aa).

The protein belongs to the UPF0162 family.

This is UPF0162 protein VC_2176 from Vibrio cholerae serotype O1 (strain ATCC 39315 / El Tor Inaba N16961).